The sequence spans 298 residues: Lipoyl synthase (298 aa).

[4Fe-4S] cluster is bound by residues C40, C45, C51, C67, C71, C74, and S280. The Radical SAM core domain maps to 53–269 (AVRKTATFMI…KEIALSKGFS (217 aa)).

This sequence belongs to the radical SAM superfamily. Lipoyl synthase family. It depends on [4Fe-4S] cluster as a cofactor.

The protein resides in the cytoplasm. It carries out the reaction [[Fe-S] cluster scaffold protein carrying a second [4Fe-4S](2+) cluster] + N(6)-octanoyl-L-lysyl-[protein] + 2 oxidized [2Fe-2S]-[ferredoxin] + 2 S-adenosyl-L-methionine + 4 H(+) = [[Fe-S] cluster scaffold protein] + N(6)-[(R)-dihydrolipoyl]-L-lysyl-[protein] + 4 Fe(3+) + 2 hydrogen sulfide + 2 5'-deoxyadenosine + 2 L-methionine + 2 reduced [2Fe-2S]-[ferredoxin]. Its pathway is protein modification; protein lipoylation via endogenous pathway; protein N(6)-(lipoyl)lysine from octanoyl-[acyl-carrier-protein]. In terms of biological role, catalyzes the radical-mediated insertion of two sulfur atoms into the C-6 and C-8 positions of the octanoyl moiety bound to the lipoyl domains of lipoate-dependent enzymes, thereby converting the octanoylated domains into lipoylated derivatives. In Bacillus cereus (strain G9842), this protein is Lipoyl synthase.